The sequence spans 151 residues: Extracellular globin-4 (151 aa).

In terms of domain architecture, Globin spans 6 to 151 (CCSYEDRREI…LVARIAKDLP (146 aa)). Residues C7 and C138 are joined by a disulfide bond. H101 is a binding site for heme b.

It belongs to the globin family. As to quaternary structure, the extracellular hemoglobin of the earthworm consists of 12 subunits that have a hexagonal bilayer structure with a molecular weight near 3.8 million. Each one-twelfth subunit is composed primarily of disulfide linked trimers (chains A, B, and C) and monomers (chain D).

It localises to the secreted. This is Extracellular globin-4 from Lumbricus terrestris (Common earthworm).